The following is a 119-amino-acid chain: Protein TusC (119 aa).

This sequence belongs to the DsrF/TusC family. As to quaternary structure, heterohexamer, formed by a dimer of trimers. The hexameric TusBCD complex contains 2 copies each of TusB, TusC and TusD. The TusBCD complex interacts with TusE.

It localises to the cytoplasm. Functionally, part of a sulfur-relay system required for 2-thiolation of 5-methylaminomethyl-2-thiouridine (mnm(5)s(2)U) at tRNA wobble positions. The chain is Protein TusC from Buchnera aphidicola subsp. Acyrthosiphon pisum (strain APS) (Acyrthosiphon pisum symbiotic bacterium).